The chain runs to 681 residues: Type VI secretion system spike protein VgrG2 (681 aa).

The tract at residues 284-309 is disordered; sequence AVAGSGKSNSSALQPGQTFSLTEHPN. Residues 289 to 309 show a composition bias toward polar residues; sequence GKSNSSALQPGQTFSLTEHPN.

Belongs to the VgrG protein family.

Functionally, part of the type VI secretion system specialized secretion system, which delivers several virulence factors in both prokaryotic and eukaryotic cells during infection. Plays an essential role in bacterial mobility and biofilm formation. This Aeromonas hydrophila protein is Type VI secretion system spike protein VgrG2.